The sequence spans 393 residues: NAD(P)H-quinone oxidoreductase subunit H, chloroplastic (393 aa).

It belongs to the complex I 49 kDa subunit family. In terms of assembly, NDH is composed of at least 16 different subunits, 5 of which are encoded in the nucleus.

It localises to the plastid. The protein localises to the chloroplast thylakoid membrane. It catalyses the reaction a plastoquinone + NADH + (n+1) H(+)(in) = a plastoquinol + NAD(+) + n H(+)(out). The enzyme catalyses a plastoquinone + NADPH + (n+1) H(+)(in) = a plastoquinol + NADP(+) + n H(+)(out). NDH shuttles electrons from NAD(P)H:plastoquinone, via FMN and iron-sulfur (Fe-S) centers, to quinones in the photosynthetic chain and possibly in a chloroplast respiratory chain. The immediate electron acceptor for the enzyme in this species is believed to be plastoquinone. Couples the redox reaction to proton translocation, and thus conserves the redox energy in a proton gradient. The protein is NAD(P)H-quinone oxidoreductase subunit H, chloroplastic of Fagopyrum esculentum subsp. ancestrale (Wild buckwheat).